The following is a 356-amino-acid chain: Sulfate/thiosulfate import ATP-binding protein CysA (356 aa).

An ABC transporter domain is found at Ile3–Leu237. Position 35–42 (Gly35–Thr42) interacts with ATP.

It belongs to the ABC transporter superfamily. Sulfate/tungstate importer (TC 3.A.1.6) family. The complex is composed of two ATP-binding proteins (CysA), two transmembrane proteins (CysT and CysW) and a solute-binding protein (CysP).

The protein localises to the cell inner membrane. The enzyme catalyses sulfate(out) + ATP + H2O = sulfate(in) + ADP + phosphate + H(+). It carries out the reaction thiosulfate(out) + ATP + H2O = thiosulfate(in) + ADP + phosphate + H(+). Functionally, part of the ABC transporter complex CysAWTP involved in sulfate/thiosulfate import. Responsible for energy coupling to the transport system. The polypeptide is Sulfate/thiosulfate import ATP-binding protein CysA (Leptospira interrogans serogroup Icterohaemorrhagiae serovar copenhageni (strain Fiocruz L1-130)).